The sequence spans 456 residues: Pantothenate kinase 2, mitochondrial (456 aa).

The disordered stretch occupies residues 16 to 89 (AGRFGAPMER…TSAGRPRAEG (74 aa)). Low complexity-rich tracts occupy residues 28 to 39 (RAAATSAAVGES) and 55 to 65 (SSAAPSGSGEA). Ser55, Ser56, and Ser75 each carry phosphoserine. Residues 154-161 (LELKDLTL) carry the Nuclear export signal motif. Glu224 functions as the Proton acceptor in the catalytic mechanism. Acetyl-CoA is bound by residues Ser278, Ser281, and Arg293.

Belongs to the type II pantothenate kinase family. Homodimer.

It is found in the cytoplasm. The protein resides in the cytosol. The catalysed reaction is (R)-pantothenate + ATP = (R)-4'-phosphopantothenate + ADP + H(+). Its pathway is cofactor biosynthesis; coenzyme A biosynthesis; CoA from (R)-pantothenate: step 1/5. With respect to regulation, inhibited by acetyl-CoA. Inhibited by calcium hopantenate. Activated by palmitoylcarnitine. Catalyzes the phosphorylation of pantothenate to generate 4'-phosphopantothenate in the first and rate-determining step of coenzyme A (CoA) synthesis. The sequence is that of Pantothenate kinase 2, mitochondrial (Pank2) from Mus musculus (Mouse).